A 260-amino-acid polypeptide reads, in one-letter code: 3-oxoadipate CoA-transferase subunit B (260 aa).

The active site involves Glu-51.

Belongs to the 3-oxoacid CoA-transferase subunit B family. As to quaternary structure, heterotetramer composed of 2 A and 2 B subunits.

It catalyses the reaction 3-oxoadipate + succinyl-CoA = 3-oxoadipyl-CoA + succinate. It participates in aromatic compound metabolism; beta-ketoadipate pathway; acetyl-CoA and succinyl-CoA from 3-oxoadipate: step 1/2. In Pseudomonas knackmussii (strain DSM 6978 / CCUG 54928 / LMG 23759 / B13), this protein is 3-oxoadipate CoA-transferase subunit B (catJ).